The sequence spans 286 residues: MENLWFIIKAIIIGIVEGITEFLPVSSTGHMIIVEDLINFKEGVMPASLYTKQYIDAFTMIIQLGAILAIVVLYWDKIKRSFENFAPSKPKSGFKFWLNIAVSAVPAGVLGLKFHSKINEKLFNPGSVTAALIVGAIWMIFAEKRYRGKFTTKDIDNVTIKQAFIIGCFQCLALWPGMSRSASTIIGAWIVGLSTVAAAEFSFFLALPVMAGVTYKSLKDINVFALGSMHIVGLTVGFIVSFIVALIVVDKFITFLKKKPMRVFAMYRILLGIVLIILSLFNVISM.

7 consecutive transmembrane segments (helical) span residues W5–V25, I55–W75, S92–L112, L122–A142, I185–L205, M229–V249, and F264–I284.

The protein belongs to the UppP family.

The protein resides in the cell membrane. It catalyses the reaction di-trans,octa-cis-undecaprenyl diphosphate + H2O = di-trans,octa-cis-undecaprenyl phosphate + phosphate + H(+). Functionally, catalyzes the dephosphorylation of undecaprenyl diphosphate (UPP). Confers resistance to bacitracin. The chain is Undecaprenyl-diphosphatase from Clostridium novyi (strain NT).